Reading from the N-terminus, the 71-residue chain is Vitellogenin-B1 (71 aa).

Positions 1 to 15 (MRGIILAQLLALAGS) are cleaved as a signal peptide. The 48-residue stretch at 24–71 (FSESKPYVYNYEGIILNGIPENGLARSGIKLNCKAEISGYAQRSYMLK) folds into the Vitellogenin domain.

As to expression, produced by the liver, secreted into the blood and then sequestered by receptor mediated endocytosis into growing oocytes, where it is generally cleaved, giving rise to the respective yolk components.

In terms of biological role, precursor of the major egg-yolk proteins that are sources of nutrients during early development of oviparous organisms. This is Vitellogenin-B1 from Xenopus laevis (African clawed frog).